Consider the following 574-residue polypeptide: MGRRHGWADEFRTFFPTLWLILAPLILSPLLFFGQEGKCAFVILTMSCYWVAEVVPLAVTSFIPMIALPFLGIVSIKEVAPKYFADTNIVFFNSLMLSLAVEECQLHKRIALKMLTYVGTRPHWLMAGFMIITSFISLWISDTACCALMAPIAYALLEEIMIPKMRPEEKENEIEVMKIFDKEDPEEKEKKKLDTSRLSVRDRGICKCMMLLVAHASLIGGTGTINSTGPNLIFRDNIEKNFPNEDHGISYLSWMAFAIPPMIFYMFSSWFIVQLQFLGPRHLMGMFREPTETEKQEEEVAKRAVWKSYDQLGPMTWAEKSTLVIFVLAVLSWVSSDPKVIPGWSDLFRKGYVTDSCSGLVAVFLLFIWPKKKPDFRIFRKDKSRPSVRQEPLIDWDCVRRRFPWSIILLLGAGFAISDAVRVSGLSSLIACSLNSTISKMPFFVMQIILSIVVVVMTEFSTNSATASIFIPISFKMAEAVGAHPLYFSIPTAIGPSFSFMLPMATPANAIVYETKTIRMIDMVSCGVFLNIFCIAITAINMNTWAFWLFNMGTYPDYALRHATNMTGNSSQCF.

The next 11 membrane-spanning stretches (helical) occupy residues 14 to 34 (FFPT…LFFG), 54 to 74 (VVPL…LGIV), 124 to 144 (WLMA…SDTA), 205 to 225 (ICKC…TGTI), 253 to 273 (SWMA…WFIV), 323 to 343 (LVIF…VIPG), 350 to 370 (KGYV…FIWP), 403 to 423 (FPWS…AVRV), 441 to 461 (MPFF…TEFS), 485 to 505 (PLYF…LPMA), and 520 to 540 (MIDM…ITAI). N-linked (GlcNAc...) asparagine glycans are attached at residues asparagine 565 and asparagine 569.

This sequence belongs to the SLC13A/DASS transporter (TC 2.A.47) family. NADC subfamily.

The protein localises to the membrane. This is an uncharacterized protein from Caenorhabditis elegans.